A 476-amino-acid polypeptide reads, in one-letter code: Protein transport protein Sec61 subunit alpha (476 aa).

The Cytoplasmic segment spans residues 2 to 33 (GIKFLEVIKPFCAVLPEIQKPERKIQFREKVL). A helical transmembrane segment spans residues 34 to 53 (WTAITLFIFLVCCQIPLFGI). Topologically, residues 54–76 (MSSDSADPFYWMRVILASNRGTL) are lumenal. Residues 77 to 96 (MELGISPIVTSGLIMQLLAG) traverse the membrane as a helical segment. The Cytoplasmic segment spans residues 97–117 (AKIIGVGDTPKDRALFNGAQK). The chain crosses the membrane as a helical span at residues 118–138 (LFGMIITIGQAIVYVMTGMYG). Residues 139–144 (DPSEMG) are Lumenal-facing. The chain crosses the membrane as a helical span at residues 145-165 (AGICLLIIIQLFVAGLIVLLL). The Cytoplasmic portion of the chain corresponds to 166–172 (DELLQKG). The helical transmembrane segment at 173–193 (YGLGSGISLFIATNICETIVW) threads the bilayer. Residues 194–240 (KAFSPTTVNTGRGTEFEGAIIALFHLLATRTDKVRALREGFYRQNLP) are Lumenal-facing. Residues 241-261 (NLMNLIATVFVFAVVIYFQGF) traverse the membrane as a helical segment. Residues 262 to 288 (RVDLPIKSARYRGQYNTYPIKLFYTSN) are Cytoplasmic-facing. The helical transmembrane segment at 289–309 (IPIILQSALVSNLYVISQMLS) threads the bilayer. Residues 310–354 (TRFSGNFLVNLLGTWSDATSGGPARAYPVAGLCYYLSPPESFGSV) are Lumenal-facing. Residues 355–375 (LDDPVHAGIYIVFMLGSCAFF) form a helical membrane-spanning segment. The Cytoplasmic segment spans residues 376–420 (SKTWIEVSGSSAKDVAKQLKEQQMVMRGHRETSMVHELNRYIPTA). Residues 421–441 (AAFGGLCIGGLSVMADFLGAI) traverse the membrane as a helical segment. At 442 to 445 (GSGT) the chain is on the lumenal side. A helical membrane pass occupies residues 446–462 (GILLAVTIIYQYFEIFV). Residues 463–476 (KEQSEVGSMGALLF) are Cytoplasmic-facing.

It belongs to the SecY/SEC61-alpha family. As to quaternary structure, the SEC61 channel-forming translocon complex consists of channel-forming core components SEC61A1, SEC61B and SEC61G and different auxiliary components such as SEC62 and SEC63. The SEC61 channel associates with the multi-pass translocon (MPT) complex.

The protein resides in the endoplasmic reticulum membrane. In terms of biological role, component of SEC61 channel-forming translocon complex that mediates transport of signal peptide-containing precursor polypeptides across the endoplasmic reticulum (ER). Forms a ribosome receptor and a gated pore in the ER membrane, both functions required for cotranslational translocation of nascent polypeptides. May cooperate with auxiliary protein SEC62, SEC63 and HSPA5/BiP to enable post-translational transport of small presecretory proteins. The SEC61 channel is also involved in ER membrane insertion of transmembrane proteins: it mediates membrane insertion of the first few transmembrane segments of proteins, while insertion of subsequent transmembrane regions of multi-pass membrane proteins is mediated by the multi-pass translocon (MPT) complex. The polypeptide is Protein transport protein Sec61 subunit alpha (sec61a) (Hemitripterus americanus (Sea raven)).